Consider the following 1034-residue polypeptide: Beta-galactosidase (1034 aa).

Glu-481 (proton donor) is an active-site residue. The Nucleophile role is filled by Glu-547.

This sequence belongs to the glycosyl hydrolase 2 family.

The catalysed reaction is Hydrolysis of terminal non-reducing beta-D-galactose residues in beta-D-galactosides.. The sequence is that of Beta-galactosidase (bgaM) from Priestia megaterium (strain DSM 319 / IMG 1521) (Bacillus megaterium).